A 343-amino-acid chain; its full sequence is Homeobox-leucine zipper protein HOX16 (343 aa).

The homeobox DNA-binding region spans Leu-74 to Gln-133. The segment at Lys-132–Lys-176 is leucine-zipper. The disordered stretch occupies residues Phe-218–Ser-239.

Belongs to the HD-ZIP homeobox family. Class I subfamily. In terms of tissue distribution, expressed in seedlings, stems, leaf sheaths and blades and panicles.

Its subcellular location is the nucleus. Functionally, probable transcription factor. This Oryza sativa subsp. japonica (Rice) protein is Homeobox-leucine zipper protein HOX16 (HOX16).